A 237-amino-acid polypeptide reads, in one-letter code: 7-cyano-7-deazaguanine synthase (237 aa).

10-20 (FSGGQDSTTCL) contributes to the ATP binding site. Zn(2+)-binding residues include Cys-189, Cys-198, Cys-201, and Cys-204.

It belongs to the QueC family. Requires Zn(2+) as cofactor.

It catalyses the reaction 7-carboxy-7-deazaguanine + NH4(+) + ATP = 7-cyano-7-deazaguanine + ADP + phosphate + H2O + H(+). Its pathway is purine metabolism; 7-cyano-7-deazaguanine biosynthesis. Functionally, catalyzes the ATP-dependent conversion of 7-carboxy-7-deazaguanine (CDG) to 7-cyano-7-deazaguanine (preQ(0)). In Aeromonas salmonicida (strain A449), this protein is 7-cyano-7-deazaguanine synthase.